The sequence spans 314 residues: Oxidoreductase poxI (314 aa).

Belongs to the NmrA-type oxidoreductase family. Isoflavone reductase subfamily.

It functions in the pathway secondary metabolite biosynthesis. Oxidoreductase; part of the gene cluster that mediates the biosynthesis of oxaleimides, cytotoxic compounds containing an unusual disubstituted succinimide moiety. The first step of the pathway is provided by the HR-PKS poxF that serves in a new mode of collaborative biosynthesis with the PKS-NRPS poxE, by providing the olefin containing amino acid substrate via the synthesis of an ACP-bound dec-4-enoate. The cytochrome P450 monooxygenase poxM-catalyzed oxidation at the alpha-position creates the enzyme-bound 2-hydroxydec-4-enoyl-ACP thioester, which may be prone to spontaneous hydrolysis to yield 2-hydroxydec-4-enoic acid due to increased electrophilicity of the carbonyl. 2-hydroxydec-4-enoic acid can then be further oxidized by poxM to yield the alpha-ketoacid 2-oxodec-4-enoicacid, which is reductively aminated by the aminotransferase poxL to yield (S,E)-2-aminodec-4-enoic acid. The Hybrid PKS-NRPS synthetase poxE then performs condensation between the octaketide product of its PKS modules and the amino group of (S,E)-2-aminodec-4-enoic acid which is activated and incorporated by the adenylation domain. The resulting aminoacyl product can be cyclized by the Diels-Alderase PoxQ and reductively released by the reductive (R) domain of poxE to yield an aldehyde intermediate. The released aldehyde is then substrate for a Knoevenagel condensation by the hydrolyase poxO followed by an oxidation at the 5-position of the pyrrolidone ring. The presence of the olefin from the amino acid building block allows for migration of the substituted allyl group to occur. This allylic transposition reaction takes place in a conjugate addition, semipinacol-like fashion to yield a succinimide intermediate. Iterative two-electron oxidations of the C7 methyl of the succinimide intermediate to the carboxylic acid can be catalyzed by one of two remaining cytochrome P450 monooxygenasess poxC or poxD to yield oxaleimide A. Subsequent oxidation yields the maleimide scaffold oxaleimide I. Both oxaleimide A and oxaleimide I can undergo oxidative modifications in the decalin ring to yield the series of products oxaleimides B to H. The sequence is that of Oxidoreductase poxI from Penicillium oxalicum (strain 114-2 / CGMCC 5302) (Penicillium decumbens).